Consider the following 173-residue polypeptide: Photosystem I assembly protein Ycf3 (173 aa).

3 TPR repeats span residues 35-68 (AYVY…ETDP), 72-105 (GETL…NPKQ), and 120-153 (GRIA…NPGG).

It belongs to the Ycf3 family.

It is found in the cellular thylakoid membrane. Its function is as follows. Essential for the assembly of the photosystem I (PSI) complex. May act as a chaperone-like factor to guide the assembly of the PSI subunits. The chain is Photosystem I assembly protein Ycf3 from Synechococcus sp. (strain CC9902).